Here is a 424-residue protein sequence, read N- to C-terminus: Steryl acetyl hydrolase 1 (424 aa).

Residue A2 is modified to N-acetylalanine. At 2-45 the chain is on the cytoplasmic side; the sequence is AANSGLDSKVEYYRLQENEIISAVSSEDADQNDAGFRLSTIHLH. A helical; Signal-anchor for type II membrane protein membrane pass occupies residues 46 to 66; that stretch reads LFHGLKFAALLFTVVPVFIIL. Residues 67–424 are Lumenal-facing; sequence DSMKIIFQRK…IARILEFMQS (358 aa). An N-linked (GlcNAc...) asparagine glycan is attached at N85. Residues 176–178 carry the Involved in the stabilization of the negatively charged intermediate by the formation of the oxyanion hole motif; it reads HGG. The active site involves S250. N283 carries an N-linked (GlcNAc...) asparagine glycan. H395 is a catalytic residue. The N-linked (GlcNAc...) asparagine glycan is linked to N401.

The protein belongs to the 'GDXG' lipolytic enzyme family.

It is found in the endoplasmic reticulum membrane. Required for the deacetylation of acetylated sterols. Involved in the resistance to eugenol and pregnenolone toxicity. The polypeptide is Steryl acetyl hydrolase 1 (SAY1) (Saccharomyces cerevisiae (strain ATCC 204508 / S288c) (Baker's yeast)).